A 122-amino-acid chain; its full sequence is Large ribosomal subunit protein uL14 (122 aa).

Belongs to the universal ribosomal protein uL14 family. In terms of assembly, part of the 50S ribosomal subunit. Forms a cluster with proteins L3 and L19. In the 70S ribosome, L14 and L19 interact and together make contacts with the 16S rRNA in bridges B5 and B8.

In terms of biological role, binds to 23S rRNA. Forms part of two intersubunit bridges in the 70S ribosome. This Streptomyces coelicolor (strain ATCC BAA-471 / A3(2) / M145) protein is Large ribosomal subunit protein uL14.